The primary structure comprises 93 residues: Em protein H5 (93 aa).

Residues 1–93 form a disordered region; that stretch reads MASGQQERSE…IDESKFKTKS (93 aa). Basic and acidic residues-rich tracts occupy residues 7-19, 32-62, and 73-93; these read ERSELDRMAREGE, EAQEHLADGRSRGGETRKEQLGEEGYREMGR, and GGERAAREGIEIDESKFKTKS.

This sequence belongs to the small hydrophilic plant seed protein family.

In terms of biological role, it is thought to provide protection for the cytoplasm during the desiccation stage of embryo development. In Triticum aestivum (Wheat), this protein is Em protein H5 (EMH5).